A 151-amino-acid polypeptide reads, in one-letter code: MHEDLIKVSSNTIKKPTGQVFVVYFSSISNNTHRFIQKLNYENLRIPVNMEESVFVDKDYVIFVPTYSGGGEFTQGAVPKQVIKFLNNEKNRSFCRGVIASGNTNFGNTFAIAGPILSKKLNVPLLYQFELLGTSEDVKNVQNILETFWKT.

It belongs to the NrdI family.

Its function is as follows. Probably involved in ribonucleotide reductase function. The sequence is that of Protein NrdI from Mycoplasmopsis pulmonis (strain UAB CTIP) (Mycoplasma pulmonis).